A 286-amino-acid polypeptide reads, in one-letter code: uncharacterized protein (286 aa).

Positions 1 to 31 (MKKMSRRQFLKGMFGALAAGALTAGGGYGYA) form a signal peptide, tat-type signal. 6 residues coordinate a divalent metal cation: aspartate 65, histidine 67, aspartate 97, asparagine 130, histidine 221, and histidine 223.

Belongs to the metallophosphoesterase superfamily. Requires a divalent metal cation as cofactor. Post-translationally, predicted to be exported by the Tat system. The position of the signal peptide cleavage has not been experimentally proven.

This is an uncharacterized protein from Bacillus subtilis (strain 168).